A 211-amino-acid polypeptide reads, in one-letter code: Ribonuclease HII (211 aa).

Residues 11–200 enclose the RNase H type-2 domain; it reads EFIAGVDEVG…VKKLLSTLLS (190 aa). Residues aspartate 17, glutamate 18, and aspartate 109 each contribute to the a divalent metal cation site.

This sequence belongs to the RNase HII family. The cofactor is Mn(2+). Requires Mg(2+) as cofactor.

It localises to the cytoplasm. The catalysed reaction is Endonucleolytic cleavage to 5'-phosphomonoester.. Functionally, endonuclease that specifically degrades the RNA of RNA-DNA hybrids. This chain is Ribonuclease HII, found in Histophilus somni (strain 2336) (Haemophilus somnus).